The chain runs to 367 residues: MDLSLTNRQQQVLRATVDHYIATAEPVGSKALAREYALSISPATIRNVMGRLEEEGLLFQPHTSAGRVPSDFGYRHYVDELVMPSTTLMSQIKQALDQKLRTDSWIFEVLLRDAAQILATLSGCVALITLPQAATSTIRHLHLVQVEPHRVMLILVTDAYETQSVMMELPHSAWDEVDPDRIEQELQILSNFLNHHFVGSSLQDLVALDPCELDREFQKYTDFLKILLTDLTQQCKSLSPKNILVGGLAEVLRQPEFSELQQAQTLIHLLEDGQDLLRPLFNELMADEIKQGADVVPRSTKVNVRIGSENSLESIQAYSLVSSTYQKGELPMGSVGVLGPTRMAYEKVIALVTVTADYLSTCLTQVA.

It belongs to the HrcA family.

Functionally, negative regulator of class I heat shock genes (grpE-dnaK-dnaJ and groELS operons). Prevents heat-shock induction of these operons. The polypeptide is Heat-inducible transcription repressor HrcA (Acaryochloris marina (strain MBIC 11017)).